Consider the following 175-residue polypeptide: Putative adenylate cyclase MJ0240 (175 aa).

One can recognise a CYTH domain in the interval 1–175 (MIEVEIKVKI…RKSYLELRGL (175 aa)). The active-site Proton acceptor is Y37.

Belongs to the adenylyl cyclase CyaB family.

It localises to the cytoplasm. It carries out the reaction ATP = 3',5'-cyclic AMP + diphosphate. Its function is as follows. Could catalyze the biosynthesis of cyclic AMP (cAMP) from ATP. This is Putative adenylate cyclase MJ0240 from Methanocaldococcus jannaschii (strain ATCC 43067 / DSM 2661 / JAL-1 / JCM 10045 / NBRC 100440) (Methanococcus jannaschii).